A 342-amino-acid polypeptide reads, in one-letter code: S-adenosylmethionine:tRNA ribosyltransferase-isomerase (342 aa).

This sequence belongs to the QueA family. As to quaternary structure, monomer.

The protein resides in the cytoplasm. It catalyses the reaction 7-aminomethyl-7-carbaguanosine(34) in tRNA + S-adenosyl-L-methionine = epoxyqueuosine(34) in tRNA + adenine + L-methionine + 2 H(+). The protein operates within tRNA modification; tRNA-queuosine biosynthesis. Functionally, transfers and isomerizes the ribose moiety from AdoMet to the 7-aminomethyl group of 7-deazaguanine (preQ1-tRNA) to give epoxyqueuosine (oQ-tRNA). The chain is S-adenosylmethionine:tRNA ribosyltransferase-isomerase from Geobacillus sp. (strain WCH70).